A 349-amino-acid polypeptide reads, in one-letter code: N-formyl peptide receptor 3 (349 aa).

Topologically, residues 1–27 are extracellular; that stretch reads METNFSIPLNETEEVLPEPAGHTVLWI. N-linked (GlcNAc...) asparagine glycosylation is found at N4 and N10. The helical transmembrane segment at 28–50 threads the bilayer; that stretch reads FSLLVHGVTFIFGVLGNGLVIWV. The Cytoplasmic segment spans residues 51-61; it reads AGFLMTRTVNT. Residues 62–83 form a helical membrane-spanning segment; sequence ICYLNLALADFSFSAILPFHMV. Over 84 to 100 the chain is Extracellular; the sequence is SVAMREKWPFGSFLCKL. The cysteines at positions 98 and 176 are disulfide-linked. A helical membrane pass occupies residues 101-121; that stretch reads VHVMIDINLFVSVYLITIIAL. Over 122-140 the chain is Cytoplasmic; sequence DRCICVLHPAWAQNHRTMS. Residues 141-162 form a helical membrane-spanning segment; sequence LAKRVMTGLWILTIVLTLPNFI. At 163-205 the chain is on the extracellular side; that stretch reads FWTTISTTNGDTYCIFNFPFWGDTAVERLNVFITMAKVFLILH. The helical transmembrane segment at 206–226 threads the bilayer; sequence FIIGFSMPMSIITVCYGIIAA. Topologically, residues 227–242 are cytoplasmic; that stretch reads KIHRNHMIKSSRPLRV. Residues 243-266 form a helical membrane-spanning segment; that stretch reads FAAVVASFFICWFPYELIGILMAV. Residues 267–286 lie on the Extracellular side of the membrane; that stretch reads WLKEMLLNGKYKIILVLINP. The chain crosses the membrane as a helical span at residues 287 to 306; sequence TSSLAFFNSCLNPILYVFLG. Over 307 to 349 the chain is Cytoplasmic; the sequence is SNFQERLIRSLPTSLERALTEVPDSAQTSNTHTTSASPPEETE. Residues 327 to 349 form a disordered region; it reads EVPDSAQTSNTHTTSASPPEETE. The span at 331–343 shows a compositional bias: polar residues; that stretch reads SAQTSNTHTTSAS.

This sequence belongs to the G-protein coupled receptor 1 family.

The protein localises to the cell membrane. Low affinity receptor for N-formyl-methionyl peptides, which are powerful neutrophils chemotactic factors. Binding of FMLP to the receptor causes activation of neutrophils. This response is mediated via a G-protein that activates a phosphatidylinositol-calcium second messenger system. The polypeptide is N-formyl peptide receptor 3 (FPR3) (Gorilla gorilla gorilla (Western lowland gorilla)).